The following is a 193-amino-acid chain: Homeobox protein HD-12 (193 aa).

The homeobox; TALE-type DNA-binding region spans 123 to 185 (SVIRRINFPK…NARRRILPFM (63 aa)).

This sequence belongs to the TALE/KNOX homeobox family.

It localises to the nucleus. The polypeptide is Homeobox protein HD-12 (HD-12) (Encephalitozoon cuniculi (strain GB-M1) (Microsporidian parasite)).